The following is a 227-amino-acid chain: MCGRFTLYSAFDDIIDQFDIDQFFPKGEYQPSYNVAPSQNILAIINDGSNNRLGKLRWGLIPPWAKDEKIGYKMINARAETITEKPAFRRPLVSKRCIIPADSFYEWKRLDSKTKIPMRIKLKSSALFAFAGLYEKWSTHQGYPLYTCTIITTEPNEFMKDIHDRMPVILAHDHEKEWLNPKNTSPDYLQSLLLPYDADDMEAYQVSSLVNSPKNNSAELLDAENHM.

Catalysis depends on Cys2, which acts as the Nucleophile. Residue Cys2 is modified to Thiazolidine linkage to a ring-opened DNA abasic site. Glu106 is an active-site residue.

The protein belongs to the SOS response-associated peptidase family.

With respect to regulation, formation and reversal of DNA-protein cross-link depends on DNA context. Catalyzes formation of the thiazolidine linkage in presence of abasic sites in single-stranded DNA. Mediates the reversal of the thiazolidine cross-link in presence of double stranded DNA. Sensor of abasic sites in single-stranded DNA (ssDNA) required to preserve genome integrity by promoting error-free repair of abasic sites. Recognizes and binds abasic sites in ssDNA at replication forks and chemically modifies the lesion by forming a covalent cross-link with DNA: forms a stable thiazolidine linkage between a ring-opened abasic site and the alpha-amino and sulfhydryl substituents of its N-terminal catalytic cysteine residue. The DNA-protein cross-link is then reversed: able to catalyze the reversal of the thiazolidine cross-link and cycle between a cross-link and a non-cross-linked state depending on DNA context: mediates self-reversal of the thiazolidine cross-link in double stranded DNA. May act as a protease: mediates autocatalytic processing of its N-terminal methionine in order to expose the catalytic cysteine. This chain is Abasic site processing protein YoaM (yoaM), found in Bacillus subtilis (strain 168).